We begin with the raw amino-acid sequence, 20 residues long: Agglutinin beta-4 chain (20 aa).

This sequence belongs to the jacalin lectin family. In terms of assembly, tetramer of four alpha chains associated with two or four beta chains.

D-galactose-specific lectin, binds the T-antigen structure Gal-beta1,3-GalNAc (Thomsen-Friedenreich-antigen-specific lectin). Potent and selective stimulant of distinct T- and B-cell functions. Shows a unique ability to specifically recognize IgA-1 from human serum. The protein is Agglutinin beta-4 chain of Artocarpus integer (Jack fruit).